Consider the following 283-residue polypeptide: Protease HtpX (283 aa).

2 helical membrane passes run 4-24 (IALFLATNFAVMIVLGIILSV) and 33-53 (GGILIMSVLFGFAGSLISLFM). His139 is a binding site for Zn(2+). Glu140 is an active-site residue. His143 contributes to the Zn(2+) binding site. The next 2 helical transmembrane spans lie at 147–167 (GDMVTMTLLQGVLNTFVIFLS) and 192–212 (FLVSMVLEILFGVLATIIAMW). A Zn(2+)-binding site is contributed by Glu218.

Belongs to the peptidase M48B family. Zn(2+) serves as cofactor.

The protein localises to the cell inner membrane. This chain is Protease HtpX, found in Glaesserella parasuis serovar 5 (strain SH0165) (Haemophilus parasuis).